Reading from the N-terminus, the 155-residue chain is Endoribonuclease YbeY (155 aa).

The Zn(2+) site is built by histidine 120, histidine 124, and histidine 130.

The protein belongs to the endoribonuclease YbeY family. Zn(2+) serves as cofactor.

It is found in the cytoplasm. Functionally, single strand-specific metallo-endoribonuclease involved in late-stage 70S ribosome quality control and in maturation of the 3' terminus of the 16S rRNA. This Staphylococcus epidermidis (strain ATCC 12228 / FDA PCI 1200) protein is Endoribonuclease YbeY.